A 309-amino-acid chain; its full sequence is NADH-cytochrome b5 reductase 2 (309 aa).

The helical transmembrane segment at 3–23 (ILTAPVLIGVSIVVITVLYLF) threads the bilayer. Positions 48–160 (SVKYPLPLIE…RGPNGLLVYN (113 aa)) constitute an FAD-binding FR-type domain. Residues 140–170 (DNMK…IRPD) and 179–214 (KFKH…VCSL) each bind FAD.

The protein belongs to the flavoprotein pyridine nucleotide cytochrome reductase family. The cofactor is FAD.

It is found in the membrane. The catalysed reaction is 2 Fe(III)-[cytochrome b5] + NADH = 2 Fe(II)-[cytochrome b5] + NAD(+) + H(+). Its function is as follows. NADH-cytochrome b5 reductases are involved in desaturation and elongation of fatty acids, cholesterol biosynthesis and drug metabolism. The sequence is that of NADH-cytochrome b5 reductase 2 (cyb5r2) from Danio rerio (Zebrafish).